The primary structure comprises 142 residues: Thioredoxin-like protein 4A (142 aa).

Cysteines 38 and 79 form a disulfide. Ser132 is subject to Phosphoserine.

Belongs to the DIM1 family. Component of the precatalytic spliceosome (spliceosome B complex). Component of the U5 snRNP complex. Component of the U4/U6-U5 tri-snRNP complex. The U4/U6-U5 tri-snRNP complex is a building block of the precatalytic spliceosome (spliceosome B complex). The U4/U6-U5 tri-snRNP complex is composed of the U4, U6 and U5 snRNAs and at least PRPF3, PRPF4, PRPF6, PRPF8, PRPF31, SNRNP200, TXNL4A, SNRNP40, SNRPB, SNRPD1, SNRPD2, SNRPD3, SNRPE, SNRPF, SNRPG, DDX23, CD2BP2, PPIH, SNU13, EFTUD2, SART1 and USP39, plus LSM2, LSM3, LSM4, LSM5, LSM6, LSM7 and LSM8. Directly interacts with CD2BP2. Interacts with HNRPF, HNRPH2, NEDD9 and PQBP1. Interacts with ERBB4. Post-translationally, the disulfide bond seen in structures determined by X-ray crystallography and NMR is not essential for protein folding and function.

It localises to the nucleus. Functionally, plays a role in pre-mRNA splicing as component of the U5 snRNP and U4/U6-U5 tri-snRNP complexes that are involved in spliceosome assembly, and as component of the precatalytic spliceosome (spliceosome B complex). This Homo sapiens (Human) protein is Thioredoxin-like protein 4A (TXNL4A).